The primary structure comprises 83 residues: Mu-theraphotoxin-Hhn2m (83 aa).

An N-terminal signal peptide occupies residues 1 to 21; it reads MKASMFLALAGLVLLFVVGYA. A propeptide spanning residues 22–48 is cleaved from the precursor; the sequence is SESEEKEFPIELLSKIFAVDVFKGEER. 3 cysteine pairs are disulfide-bonded: C50-C65, C57-C70, and C64-C77. Position 81 is a leucine amide (L81).

The protein belongs to the neurotoxin 10 (Hwtx-1) family. 15 (Hntx-3) subfamily. In terms of assembly, monomer. In terms of tissue distribution, expressed by the venom gland.

The protein resides in the secreted. Its function is as follows. Lethal neurotoxin. Selectively blocks tetrodotoxin-sensitive voltage-gated sodium channels (Nav). Does not affect tetrodotoxin-resistant voltage-gated sodium channels or calcium channels. The sequence is that of Mu-theraphotoxin-Hhn2m from Cyriopagopus hainanus (Chinese bird spider).